Reading from the N-terminus, the 350-residue chain is Peroxidase 24 (350 aa).

The N-terminal stretch at 1–27 is a signal peptide; that stretch reads MANKSLEIRFLFPLVLFLVVKLLCVDG. 4 disulfides stabilise this stretch: cysteine 55/cysteine 135, cysteine 88/cysteine 93, cysteine 141/cysteine 346, and cysteine 221/cysteine 253. N-linked (GlcNAc...) asparagine glycosylation occurs at asparagine 73. The Proton acceptor role is filled by histidine 86. Positions 87, 90, 92, 94, and 96 each coordinate Ca(2+). Proline 184 is a binding site for substrate. An N-linked (GlcNAc...) asparagine glycan is attached at asparagine 189. Histidine 214 is a binding site for heme b. Residue threonine 215 participates in Ca(2+) binding. N-linked (GlcNAc...) asparagine glycosylation is present at asparagine 230. Ca(2+)-binding residues include aspartate 269 and aspartate 277.

This sequence belongs to the peroxidase family. Classical plant (class III) peroxidase subfamily. Heme b is required as a cofactor. The cofactor is Ca(2+).

Its subcellular location is the secreted. The catalysed reaction is 2 a phenolic donor + H2O2 = 2 a phenolic radical donor + 2 H2O. In terms of biological role, removal of H(2)O(2), oxidation of toxic reductants, biosynthesis and degradation of lignin, suberization, auxin catabolism, response to environmental stresses such as wounding, pathogen attack and oxidative stress. These functions might be dependent on each isozyme/isoform in each plant tissue. The chain is Peroxidase 24 (PER24) from Arabidopsis thaliana (Mouse-ear cress).